A 206-amino-acid chain; its full sequence is Thymidylate kinase (206 aa).

ATP is bound at residue 10 to 17 (GIDGAGKS).

Belongs to the thymidylate kinase family.

It carries out the reaction dTMP + ATP = dTDP + ADP. Functionally, phosphorylation of dTMP to form dTDP in both de novo and salvage pathways of dTTP synthesis. In Neisseria meningitidis serogroup C / serotype 2a (strain ATCC 700532 / DSM 15464 / FAM18), this protein is Thymidylate kinase.